Consider the following 186-residue polypeptide: Ran guanine nucleotide release factor (186 aa).

Residues Asp27 to Asp70 form an interaction with RAN region.

It belongs to the MOG1 family. As to quaternary structure, monomer. Interacts with RAN, both RAN-GTP and RAN-GDP. Competes with RCC1 for a common binding site on RAN and thereby inhibits RCC1-mediated nucleotide exchange. Forms a complex with RAN-GTP and RANBP1. Interacts with the cytoplasmic loop 2 of SCN5A.

Its subcellular location is the nucleus. It localises to the cytoplasm. The protein resides in the perinuclear region. It is found in the cell membrane. In terms of biological role, may regulate the intracellular trafficking of RAN. Promotes guanine nucleotide release from RAN and inhibits binding of new GTP by preventing the binding of the RAN guanine nucleotide exchange factor RCC1. Regulates the levels of GTP-bound RAN in the nucleus, and thereby plays a role in the regulation of RAN-dependent mitotic spindle dynamics. Enhances the expression of SCN5A at the cell membrane in cardiomyocytes. This is Ran guanine nucleotide release factor (RANGRF) from Bos taurus (Bovine).